The sequence spans 308 residues: Ribosomal RNA large subunit methyltransferase F (308 aa).

This sequence belongs to the methyltransferase superfamily. METTL16/RlmF family.

It localises to the cytoplasm. It catalyses the reaction adenosine(1618) in 23S rRNA + S-adenosyl-L-methionine = N(6)-methyladenosine(1618) in 23S rRNA + S-adenosyl-L-homocysteine + H(+). Its function is as follows. Specifically methylates the adenine in position 1618 of 23S rRNA. The chain is Ribosomal RNA large subunit methyltransferase F from Salmonella schwarzengrund (strain CVM19633).